The primary structure comprises 274 residues: 5'-3' exoribonuclease (274 aa).

Mn(2+) contacts are provided by His-8, His-10, Asp-15, His-40, Glu-65, His-76, His-190, Asp-247, and His-249.

The protein belongs to the PHP family. TrpH/YciV subfamily. Mn(2+) is required as a cofactor.

It carries out the reaction a ribonucleoside 3',5'-bisphosphate + H2O = a ribonucleoside 5'-phosphate + phosphate. Its function is as follows. Efficiently catalyzes the hydrolysis of the 3'-phosphate from 3',5'-bis-phosphonucleotides as well as the successive hydrolysis of 5'-phosphomononucleotides from the 5'-end of short pieces of RNA and DNA, with no specificity toward the identity of the nucleotide base. Is more efficient at hydrolyzing RNA oligonucleotides than DNA oligonucleotides. This enzyme can also hydrolyze annealed DNA duplexes, albeit at a catalytic efficiency lower than that of the corresponding single-stranded oligonucleotides. This Haemophilus influenzae (strain ATCC 51907 / DSM 11121 / KW20 / Rd) protein is 5'-3' exoribonuclease.